A 339-amino-acid polypeptide reads, in one-letter code: Undecaprenyl-phosphate 4-deoxy-4-formamido-L-arabinose transferase (339 aa).

A run of 2 helical transmembrane segments spans residues 235 to 255 and 269 to 289; these read LSLVGGGMALAGFLFALFLLV and LFVLFAVLFMFSGVQLLGMGL.

Belongs to the glycosyltransferase 2 family.

It localises to the cell inner membrane. The catalysed reaction is UDP-4-deoxy-4-formamido-beta-L-arabinose + di-trans,octa-cis-undecaprenyl phosphate = 4-deoxy-4-formamido-alpha-L-arabinopyranosyl di-trans,octa-cis-undecaprenyl phosphate + UDP. It functions in the pathway glycolipid biosynthesis; 4-amino-4-deoxy-alpha-L-arabinose undecaprenyl phosphate biosynthesis; 4-amino-4-deoxy-alpha-L-arabinose undecaprenyl phosphate from UDP-4-deoxy-4-formamido-beta-L-arabinose and undecaprenyl phosphate: step 1/2. It participates in bacterial outer membrane biogenesis; lipopolysaccharide biosynthesis. Functionally, catalyzes the transfer of 4-deoxy-4-formamido-L-arabinose from UDP to undecaprenyl phosphate. The modified arabinose is attached to lipid A and is required for resistance to polymyxin and cationic antimicrobial peptides. The sequence is that of Undecaprenyl-phosphate 4-deoxy-4-formamido-L-arabinose transferase from Pseudomonas paraeruginosa (strain DSM 24068 / PA7) (Pseudomonas aeruginosa (strain PA7)).